The primary structure comprises 184 residues: ATP synthase subunit b, chloroplastic (184 aa).

A helical transmembrane segment spans residues 27-49; the sequence is LATNPINLSVVLGVLVFFGKGVL.

Belongs to the ATPase B chain family. As to quaternary structure, F-type ATPases have 2 components, F(1) - the catalytic core - and F(0) - the membrane proton channel. F(1) has five subunits: alpha(3), beta(3), gamma(1), delta(1), epsilon(1). F(0) has four main subunits: a(1), b(1), b'(1) and c(10-14). The alpha and beta chains form an alternating ring which encloses part of the gamma chain. F(1) is attached to F(0) by a central stalk formed by the gamma and epsilon chains, while a peripheral stalk is formed by the delta, b and b' chains.

It is found in the plastid. The protein resides in the chloroplast thylakoid membrane. Its function is as follows. F(1)F(0) ATP synthase produces ATP from ADP in the presence of a proton or sodium gradient. F-type ATPases consist of two structural domains, F(1) containing the extramembraneous catalytic core and F(0) containing the membrane proton channel, linked together by a central stalk and a peripheral stalk. During catalysis, ATP synthesis in the catalytic domain of F(1) is coupled via a rotary mechanism of the central stalk subunits to proton translocation. In terms of biological role, component of the F(0) channel, it forms part of the peripheral stalk, linking F(1) to F(0). In Phaseolus vulgaris (Kidney bean), this protein is ATP synthase subunit b, chloroplastic.